Reading from the N-terminus, the 316-residue chain is Acetyl-coenzyme A carboxylase carboxyl transferase subunit alpha (316 aa).

The CoA carboxyltransferase C-terminal domain maps to 39–293 (RLQDKSKALT…RGELLAQLKM (255 aa)).

Belongs to the AccA family. Acetyl-CoA carboxylase is a heterohexamer composed of biotin carboxyl carrier protein (AccB), biotin carboxylase (AccC) and two subunits each of ACCase subunit alpha (AccA) and ACCase subunit beta (AccD).

Its subcellular location is the cytoplasm. It catalyses the reaction N(6)-carboxybiotinyl-L-lysyl-[protein] + acetyl-CoA = N(6)-biotinyl-L-lysyl-[protein] + malonyl-CoA. It functions in the pathway lipid metabolism; malonyl-CoA biosynthesis; malonyl-CoA from acetyl-CoA: step 1/1. Functionally, component of the acetyl coenzyme A carboxylase (ACC) complex. First, biotin carboxylase catalyzes the carboxylation of biotin on its carrier protein (BCCP) and then the CO(2) group is transferred by the carboxyltransferase to acetyl-CoA to form malonyl-CoA. This is Acetyl-coenzyme A carboxylase carboxyl transferase subunit alpha from Pseudomonas aeruginosa (strain UCBPP-PA14).